Here is a 408-residue protein sequence, read N- to C-terminus: Histidine--tRNA ligase (408 aa).

Belongs to the class-II aminoacyl-tRNA synthetase family. In terms of assembly, homodimer.

The protein localises to the cytoplasm. It carries out the reaction tRNA(His) + L-histidine + ATP = L-histidyl-tRNA(His) + AMP + diphosphate + H(+). This is Histidine--tRNA ligase from Campylobacter jejuni subsp. jejuni serotype O:6 (strain 81116 / NCTC 11828).